Here is a 298-residue protein sequence, read N- to C-terminus: tRNA pseudouridine synthase B (298 aa).

Asp-39 serves as the catalytic Nucleophile.

It belongs to the pseudouridine synthase TruB family. Type 1 subfamily.

It catalyses the reaction uridine(55) in tRNA = pseudouridine(55) in tRNA. In terms of biological role, responsible for synthesis of pseudouridine from uracil-55 in the psi GC loop of transfer RNAs. The protein is tRNA pseudouridine synthase B of Lactobacillus delbrueckii subsp. bulgaricus (strain ATCC BAA-365 / Lb-18).